A 321-amino-acid chain; its full sequence is Low affinity immunoglobulin epsilon Fc receptor (321 aa).

Residues 1–21 (MEEGQYSEIEELPRRRCCRRG) are Cytoplasmic-facing. 2 S-palmitoyl cysteine lipidation sites follow: cysteine 17 and cysteine 18. A helical; Signal-anchor for type II membrane protein membrane pass occupies residues 22 to 47 (TQIVLLGLVTAALWAGLLTLLLLWHW). Residues 48 to 321 (DTTQSLKQLE…LPTPSAPLHS (274 aa)) are Extracellular-facing. The N-linked (GlcNAc...) asparagine glycan is linked to asparagine 63. The interval 66-85 (QVSKNLESHHGDQMAQKSQS) is disordered. 3 consecutive repeats follow at residues 69-89 (KNLE…TQIS), 90-110 (QELE…LELS), and 111-131 (WNLN…LNER). Cystine bridges form between cysteine 160–cysteine 288, cysteine 163–cysteine 174, cysteine 191–cysteine 282, and cysteine 259–cysteine 273. The C-type lectin domain maps to 162–284 (TCPEKWINFQ…RKLGAWVCDR (123 aa)). Ca(2+) contacts are provided by glutamate 249, threonine 251, asparagine 269, and aspartate 270. Residues 290–321 (PPASEGSAESMGPDSRPDPDGRLPTPSAPLHS) form a disordered region. Residue serine 296 is glycosylated (O-linked (Xyl...) (chondroitin sulfate) serine).

Homotrimer. Interacts (via C-type lectin domain) with IGHE (via CH3 region); this interaction regulates IgE homeostasis. Interacts (via the C-terminus) with CR2/CD21 (via Sushi domain 1 and 2). In terms of processing, N- and O-glycosylated. The secreted form sCD23 is produced by ADAM10-mediated ectodomain shedding. Detected in urine (at protein level).

The protein resides in the cell membrane. It localises to the secreted. Functionally, low-affinity receptor for immunoglobulin E (IgE) and CR2/CD21. Has essential roles in the regulation of IgE production and in the differentiation of B cells. On B cells, initiates IgE-dependent antigen uptake and presentation to T cells. On macrophages, upon IgE binding and antigen cross-linking induces intracellular killing of parasites through activation of L-Arginine-nitric oxide pathway. This chain is Low affinity immunoglobulin epsilon Fc receptor (FCER2), found in Homo sapiens (Human).